Here is a 410-residue protein sequence, read N- to C-terminus: LIMR family protein SELMODRAFT_432208 (410 aa).

Helical transmembrane passes span 30–50, 67–87, 129–149, 156–176, and 179–199; these read LWWA…IFFY, LWVV…YAVI, VTLM…LTTL, ICLD…NTII, and ILFM…LIFA. A coiled-coil region spans residues 245 to 274; sequence RMFRKNVKKVQQELVFLEDDVEALNEAFPQ. 2 helical membrane-spanning segments follow: residues 288–308 and 330–350; these read LVFG…IIVF and GGLL…MSVI. Residues 389–400 are compositionally biased toward low complexity; the sequence is PSSAMDSSSWSA. The disordered stretch occupies residues 389–410; sequence PSSAMDSSSWSADRPCRPWPWP.

Belongs to the LIMR family.

The protein localises to the membrane. The polypeptide is LIMR family protein SELMODRAFT_432208 (Selaginella moellendorffii (Spikemoss)).